A 196-amino-acid polypeptide reads, in one-letter code: Pyridoxal 5'-phosphate synthase subunit PdxT (196 aa).

47-49 (GES) is an L-glutamine binding site. Cys-79 functions as the Nucleophile in the catalytic mechanism. L-glutamine contacts are provided by residues Arg-106 and 134–135 (IR). Active-site charge relay system residues include His-170 and Glu-172.

The protein belongs to the glutaminase PdxT/SNO family. In the presence of PdxS, forms a dodecamer of heterodimers. Only shows activity in the heterodimer.

It catalyses the reaction aldehydo-D-ribose 5-phosphate + D-glyceraldehyde 3-phosphate + L-glutamine = pyridoxal 5'-phosphate + L-glutamate + phosphate + 3 H2O + H(+). The enzyme catalyses L-glutamine + H2O = L-glutamate + NH4(+). It participates in cofactor biosynthesis; pyridoxal 5'-phosphate biosynthesis. Functionally, catalyzes the hydrolysis of glutamine to glutamate and ammonia as part of the biosynthesis of pyridoxal 5'-phosphate. The resulting ammonia molecule is channeled to the active site of PdxS. The polypeptide is Pyridoxal 5'-phosphate synthase subunit PdxT (Bacillus subtilis (strain 168)).